The primary structure comprises 21 residues: Complement receptor 3-related protein (21 aa).

It is found in the secreted. Its function is as follows. Plays a role in adherence of C.albicans to buccal epithelial cells, and in biofilm formation. In Candida albicans (Yeast), this protein is Complement receptor 3-related protein.